The following is a 114-amino-acid chain: Class I hydrophobin 1 (114 aa).

The N-terminal stretch at 1 to 20 (MQFTKMSAFATLALATLAAA) is a signal peptide. Disulfide bonds link cysteine 33-cysteine 93, cysteine 40-cysteine 87, cysteine 41-cysteine 74, and cysteine 94-cysteine 107.

It belongs to the fungal hydrophobin family. In terms of assembly, self-assembles to form functional amyloid fibrils called rodlets. Self-assembly into fibrillar rodlets occurs spontaneously at hydrophobic:hydrophilic interfaces and the rodlets further associate laterally to form amphipathic monolayers.

It localises to the secreted. The protein localises to the cell wall. Aerial growth, conidiation, and dispersal of filamentous fungi in the environment rely upon a capability of their secreting small amphipathic proteins called hydrophobins (HPBs) with low sequence identity. Class I can self-assemble into an outermost layer of rodlet bundles on aerial cell surfaces, conferring cellular hydrophobicity that supports fungal growth, development and dispersal; whereas Class II form highly ordered films at water-air interfaces through intermolecular interactions but contribute nothing to the rodlet structure. Pnh1 is a class I hydrophobin that might be involved in the attachment of the hydrophilic wall of hyphae to the hydrophobic surface of wood under inorganic phosphate (Pi)-deficient conditions and enable the mycelium to degrade efficiently the components of wood and to acquire nutrients containing Pi. The polypeptide is Class I hydrophobin 1 (Pholiota nameko).